Consider the following 520-residue polypeptide: GMP synthase [glutamine-hydrolyzing] (520 aa).

The 194-residue stretch at 12-205 (KIIVLDYGSQ…AISICGARGD (194 aa)) folds into the Glutamine amidotransferase type-1 domain. Residue Cys89 is the Nucleophile of the active site. Catalysis depends on residues His179 and Glu181. A GMPS ATP-PPase domain is found at 206 to 395 (WSMDNFIDME…LGMPDEVVWR (190 aa)). ATP is bound at residue 233-239 (SGGVDSS).

As to quaternary structure, homodimer.

The catalysed reaction is XMP + L-glutamine + ATP + H2O = GMP + L-glutamate + AMP + diphosphate + 2 H(+). Its pathway is purine metabolism; GMP biosynthesis; GMP from XMP (L-Gln route): step 1/1. Its function is as follows. Catalyzes the synthesis of GMP from XMP. The sequence is that of GMP synthase [glutamine-hydrolyzing] from Streptococcus equi subsp. zooepidemicus (strain H70).